A 91-amino-acid polypeptide reads, in one-letter code: UPF0512 protein E (91 aa).

Residues 1–25 (MAIFKSISSISNSTSAMGSSNSTSN) are compositionally biased toward low complexity. Residues 1-26 (MAIFKSISSISNSTSAMGSSNSTSNR) form a disordered region.

It belongs to the UPF0512 family.

This chain is UPF0512 protein E, found in Dictyostelium discoideum (Social amoeba).